The chain runs to 449 residues: MGKLFGTDGVRGVANEYPMTAEMALNIGRATAFMFKREGHNPKILIGKDTRLSGYMLENALVSGICSMGVNAILVGVIPTPGIAYLTSSMRADAGIVISASHNPFQDNGIKIFSGDGFKLPDETELAIEDMILNNKMDQLLPRVSELGKAYRMDDARGRYIVFLKHTFPRELSLEGVKVVLDCANGATYRVAPETFYELGAEVTTLFDDPDGRNINVNCGSQYPETLAAEVLKQGADVGFAFDGDGDRLIAVDEKGNVLTGDQVIAICANVMKKEGKLTKNLVVRTVMSNIGLSVALEKLDINSIMTKVGDRYVLEEMQANGSSIGGEDSGHVIFLQHHTTGDGIVTAIQVIAAMKKEGKPLSDLAKIMDVFPQTLINVDTKSRPEISTVPELVAVIKSVEEKLGTSGRVLVRYSGTQNMCRVMVEGPTQEETLKYCKQIADVVKEELG.

S101 serves as the catalytic Phosphoserine intermediate. The Mg(2+) site is built by S101, D243, D245, and D247. Position 101 is a phosphoserine (S101).

It belongs to the phosphohexose mutase family. The cofactor is Mg(2+). Post-translationally, activated by phosphorylation.

The catalysed reaction is alpha-D-glucosamine 1-phosphate = D-glucosamine 6-phosphate. Its function is as follows. Catalyzes the conversion of glucosamine-6-phosphate to glucosamine-1-phosphate. The polypeptide is Phosphoglucosamine mutase (Syntrophus aciditrophicus (strain SB)).